We begin with the raw amino-acid sequence, 976 residues long: Terminal uridylyltransferase 1 (976 aa).

2 disordered regions span residues 1 to 47 (MVSK…DADF) and 129 to 185 (TGRS…TTEG). The interval 1 to 188 (MVSKYHRLLQ…EDDTTEGPRG (188 aa)) is required for oligomerization and may contribute to the incorporation into the MPsome complex. The span at 147–183 (ADDESDGNLDTDGSDASEGDEVESTTDADVYGEDDTT) shows a compositional bias: acidic residues. Residues 190 to 221 (VRLYSCDACPHAVFTTHAALLAHAEEHHADLL) form a C2H2-type; atypical zinc finger. 4 residues coordinate Zn(2+): C195, C198, H212, and H217. UTP contacts are provided by residues S298 and 309 to 312 (ADID). Positions 310 and 312 each coordinate Mg(2+). RNA is bound at residue R358. Positions 366–425 (ASSPILTVARRDAEDVVARSIRFILNGPATREDRLLLEGSVRDAVGPTGVQQVWWNRTSD) constitute a PAP-associated domain. UTP contacts are provided by residues 480–484 (GIRNS), K505, K509, and 523–524 (SY). Residues 652–661 (IEDPYEENLN) carry the Nucleotide recognition motif (NRM) motif. The important for catalytic activity and RNA binding stretch occupies residues 700–976 (DSSGTPAAGG…SKVTPFKSPR (277 aa)). A disordered region spans residues 732 to 755 (SESRRLPQSNSDNSGRIANGDNES).

This sequence belongs to the DNA polymerase type-B-like family. In terms of assembly, oligomer. Component of the mitochondrial 3' processome (MPsome) complex composed at least of terminal uridylyltransferase KRET1/TUT1, 3'-5' exonuclease DSS1, MPSS1, MPSS2 and MPSS3. Within the complex, interacts with DSS1, MPSS1 and MPSS3. It depends on Mg(2+) as a cofactor. Mn(2+) serves as cofactor.

The protein resides in the mitochondrion. The enzyme catalyses RNA(n) + UTP = RNA(n)-3'-uridine ribonucleotide + diphosphate. Its function is as follows. Terminal uridylyltransferase which is involved in the post-transcriptional editing of mitochondrial RNA, a process involving the addition and deletion of uridine (U) nucleotides in the pre-RNA. Specifically, catalyzes the addition of Us to the 3'-hydroxyl group of guided RNA (gRNA), ribosomal RNA (rRNA) and some mRNAs. As part of the mitochondrial 3' processome (MPsome), catalyzes the primary 3' uridylation of gRNA precursors to facilitate their recognition and to induce their processive 3'-5' degradation by DSS1, and the secondary 3' uridylation of mature gRNAs. Involved in the 3' uridylylation of the long A/U tail of some edited and never-edited mRNAs. Promotes 3' uridylylation-mediated decay of some never-edited mRNAs. Does not mediate RNA-independent UTP polymerization. The protein is Terminal uridylyltransferase 1 of Trypanosoma brucei brucei.